We begin with the raw amino-acid sequence, 388 residues long: Flavin-dependent monooxygenase (388 aa).

FAD-binding positions include 12–15, 34–36, 44–47, Arg-105, Tyr-267, Asp-289, and 296–302; these read VGVA, EKS, QALD, and PLSGQGN.

This sequence belongs to the aromatic-ring hydroxylase family. The cofactor is FAD.

It catalyses the reaction a tetracycline + NADPH + O2 + H(+) = a (1S,10aS)-3-(CONH2)-1-(Me2N)-3,3a,4,6-(HO)4-2,5-dioxo-1H,10aH,11H,11aH-cyclopenta[b]anthracene + CO + NADP(+) + H2O. It carries out the reaction 7-chlorotetracycline + NADPH + O2 + H(+) = (1S,10S,10aS)-3-(CONH2)-9-Cl-1-(Me2N)-3,3a,4,10-(HO)4-10-Me-2,5-dioxo-1H,10aH,11H,11aH-cyclopenta[b]anthracen-6-olate + CO + NADP(+) + H2O. With respect to regulation, inhibited by anhydrotetracycline. Its function is as follows. An FAD-requiring monooxygenase active on tetracycline antibiotic and some of its derivatives, which leads to their inactivation. Expression in E.coli confers high resistance to tetracycline and oxytetracycline, does not confer resistance to minocycline or tigecycline. Degrades tetracycline and oxytetracycline; the reaction requires NADPH. Degrades and confers resistance to chlortetracycline. This Unknown prokaryotic organism protein is Flavin-dependent monooxygenase (tet(50)).